A 526-amino-acid chain; its full sequence is MSYPQEVDKRRTFAIISHPDAGKTTITEKVLLYGNAIQTAGSVKGKGSQAHAKSDWMEMEKQRGISITTSVMQFPYNDCLVNLLDTPGHEDFSEDTYRTLTAVDSCLMVIDAAKGVEDRTIKLMEVTRLRDTPILTFMNKLDRDIRDPMELLDEVESVLKIHCAPITWPIGCGKLFKGVYHLYKDETYLYQSGQGSTIQEVRIIKGLDNPQLDAAVGADLAQQLREELELVQGASNEFDQELFIGGELTPVFFGTALGNFGVNHFLDGLTQWAPKPQARKADTRIVESAEEKFTGFVFKIQANMDPKHRDRVAFMRVVSGKYEKGMKLKHVRIGKDVVISDALTFMAGDRTHAEQAYAGDIIGLHNHGTIQIGDTFTQGEDLKFTGIPNFAPELFRRIRLRDPLKQKQLLKGLVQLSEEGAVQVFRPLANNDLIVGAVGVLQFDVVVARLKTEYNVEAVYENVNVATARWVECADEKKFEEFKRKNEQNLALDGGDNLTYIAPTMVNLNLSQERYPDVTFFKTREH.

The tr-type G domain occupies Asp8 to Gln277. GTP-binding positions include Ser17–Thr24, Asp85–His89, and Asn139–Asp142.

The protein belongs to the TRAFAC class translation factor GTPase superfamily. Classic translation factor GTPase family. PrfC subfamily.

Its subcellular location is the cytoplasm. Its function is as follows. Increases the formation of ribosomal termination complexes and stimulates activities of RF-1 and RF-2. It binds guanine nucleotides and has strong preference for UGA stop codons. It may interact directly with the ribosome. The stimulation of RF-1 and RF-2 is significantly reduced by GTP and GDP, but not by GMP. The protein is Peptide chain release factor 3 of Actinobacillus succinogenes (strain ATCC 55618 / DSM 22257 / CCUG 43843 / 130Z).